The sequence spans 913 residues: Anoctamin-5 (913 aa).

The Cytoplasmic portion of the chain corresponds to 1 to 299; the sequence is MGDPDLLEVL…DLIKNYYGEK (299 aa). Residues 300 to 320 form a helical membrane-spanning segment; sequence IGIYFVFLGFYTEMLFFAAVV. Topologically, residues 321-380 are extracellular; the sequence is GLACFIYGLLSMEHNTSSTEICDPEIGGQMIMCPLCDQVCDYWRLNSTCLASKFSHLFDN. Asparagine 335, asparagine 366, and asparagine 380 each carry an N-linked (GlcNAc...) asparagine glycan. The chain crosses the membrane as a helical span at residues 381 to 401; sequence ESTVFFAIFMGIWVTLFLEFW. Topologically, residues 402 to 462 are cytoplasmic; that stretch reads KQRQARLEYE…YTRIPWYFLS (61 aa). Residues 463-483 form a helical membrane-spanning segment; it reads GATVTLWMSLVVTSMVAVIVY. The Extracellular segment spans residues 484 to 511; it reads RLSVFATFASFMESDASLKQVKSFLTPQ. A helical transmembrane segment spans residues 512-532; the sequence is ITTSLTGSCLNFIVILILNFF. Topologically, residues 533–557 are cytoplasmic; it reads YEKISAWITKMEIPRTYQEYESSLT. A helical transmembrane segment spans residues 558-578; the sequence is LKMFLFQFVNFYSSCFYVAFF. Topologically, residues 579 to 679 are extracellular; sequence KGKFVGYPGK…FYEYLETVTQ (101 aa). The helical transmembrane segment at 680–700 threads the bilayer; that stretch reads FGFVTLFVASFPLAPLLALIN. Residues 701–732 lie on the Cytoplasmic side of the membrane; the sequence is NIVEIRVDAWKLTTQYRRTVASKAHSIGVWQD. Residues 733 to 753 traverse the membrane as a helical segment; the sequence is ILYGMAVLSVATNAFIVAFTS. Over 754–834 the chain is Extracellular; sequence DIIPRLVYYY…FWHVLAAKMT (81 aa). Asparagine 768, asparagine 778, and asparagine 791 each carry an N-linked (GlcNAc...) asparagine glycan. Residues 835 to 855 form a helical membrane-spanning segment; it reads FIIVMEHVVFLVKFLLAWMIP. The Cytoplasmic segment spans residues 856–913; the sequence is DVPKDVVERIKREKLMTIKILHDFELNKLKENLGINSNEFAKHVMIEENKAQLAKSTL.

The protein belongs to the anoctamin family. Highly expressed in brain, heart, kidney, lung, and skeletal muscle. Weakly expressed in bone marrow, fetal liver, placenta, spleen, thymus, osteoblasts and periodontal ligament cells.

The protein resides in the endoplasmic reticulum membrane. The protein localises to the cell membrane. In terms of biological role, plays a role in plasma membrane repair in a process involving annexins. Does not exhibit calcium-activated chloride channel (CaCC) activity. This chain is Anoctamin-5 (ANO5), found in Homo sapiens (Human).